Consider the following 62-residue polypeptide: MIPVRCFSCGKVISNYWDEYKRRVSDGENAAAVLDDLGITRYCCRRMLLSHVELVDVLSPYQ.

4 residues coordinate Zn(2+): Cys-6, Cys-9, Cys-43, and Cys-44.

The protein belongs to the archaeal Rpo10/eukaryotic RPB10 RNA polymerase subunit family. Part of the RNA polymerase complex. Zn(2+) serves as cofactor.

It localises to the cytoplasm. It carries out the reaction RNA(n) + a ribonucleoside 5'-triphosphate = RNA(n+1) + diphosphate. Its function is as follows. DNA-dependent RNA polymerase (RNAP) catalyzes the transcription of DNA into RNA using the four ribonucleoside triphosphates as substrates. This Methanosarcina barkeri (strain Fusaro / DSM 804) protein is DNA-directed RNA polymerase subunit Rpo10.